We begin with the raw amino-acid sequence, 1227 residues long: DNA-directed RNA polymerase subunit beta (1227 aa).

This sequence belongs to the RNA polymerase beta chain family. As to quaternary structure, the RNAP catalytic core consists of 2 alpha, 1 beta, 1 beta' and 1 omega subunit. When a sigma factor is associated with the core the holoenzyme is formed, which can initiate transcription.

The catalysed reaction is RNA(n) + a ribonucleoside 5'-triphosphate = RNA(n+1) + diphosphate. Its function is as follows. DNA-dependent RNA polymerase catalyzes the transcription of DNA into RNA using the four ribonucleoside triphosphates as substrates. The chain is DNA-directed RNA polymerase subunit beta from Chloroflexus aggregans (strain MD-66 / DSM 9485).